The following is a 134-amino-acid chain: Profilin-2 (134 aa).

A disulfide bridge links C13 with C118. The Involved in PIP2 interaction signature appears at 84-100; it reads AVIRGKKGSGGITIKKT. Phosphothreonine is present on T114.

Belongs to the profilin family. In terms of assembly, occurs in many kinds of cells as a complex with monomeric actin in a 1:1 ratio. Phosphorylated by MAP kinases.

The protein localises to the cytoplasm. It is found in the cytoskeleton. Its function is as follows. Binds to actin and affects the structure of the cytoskeleton. At high concentrations, profilin prevents the polymerization of actin, whereas it enhances it at low concentrations. In Olea europaea (Common olive), this protein is Profilin-2.